Here is a 959-residue protein sequence, read N- to C-terminus: Probable serine/threonine-protein kinase DDB_G0291664 (959 aa).

The disordered stretch occupies residues 154–213; sequence QQQQQQQLTPPPSPPLLPIPQPPAQNEEQQLTQPPSIPPPQQKQIKIQKSDRGTQVKSIT. The span at 162–176 shows a compositional bias: pro residues; that stretch reads TPPPSPPLLPIPQPP. ANK repeat units lie at residues 294–324 and 333–362; these read KGET…CMGI and LNKN…PLKM. Positions 482 to 762 constitute a Protein kinase domain; the sequence is IDFHTQIGSA…EVGIIETEFL (281 aa). ATP is bound by residues 488–496 and Lys-509; that span reads IGSAGNASV. The Proton acceptor role is filled by Asp-610. Residues 904–959 form a disordered region; the sequence is NNINNNNNNNNNCNNSKKFKTTSESTSALGSDASSSSSPSSSSPSPKYSASIYHHQ.

Belongs to the protein kinase superfamily. Ser/Thr protein kinase family.

The catalysed reaction is L-seryl-[protein] + ATP = O-phospho-L-seryl-[protein] + ADP + H(+). It carries out the reaction L-threonyl-[protein] + ATP = O-phospho-L-threonyl-[protein] + ADP + H(+). The sequence is that of Probable serine/threonine-protein kinase DDB_G0291664 from Dictyostelium discoideum (Social amoeba).